A 271-amino-acid chain; its full sequence is 2-aminophenol 1,6-dioxygenase subunit alpha (271 aa).

The protein belongs to the LigB/MhpB extradiol dioxygenase family. The APD complex is a heterotetramer of 2 alpha (CnbCa) and 2 beta (CnbCb) subunits.

It functions in the pathway xenobiotic degradation; nitrobenzene degradation. It participates in xenobiotic degradation; 4-chloronitrobenzene degradation. Component of the 2-aminophenol 1,6-dioxygenase (APD) complex that catalyzes the ring fission of 2-aminophenol to produce 2-aminomuconic semialdehyde. CnbCa may have a role in the stability of the complex. The complex is also active on other substrates such as 2-amino-5-chlorophenol (68% activity), protocatechuate (33% activity) and catechol (5% activity). Both 2-aminophenol and 2-amino-5-cholorophenol are likely native substrates for this dioxygenase which is involved in the reductive degradation pathway of both nitrobenzene (NB) and 4-chloronitrobenzene (4-CNB), allowing C.testosteroni strain CNB-1 to grow on these compounds as sole source of carbon, nitrogen, and energy. The protein is 2-aminophenol 1,6-dioxygenase subunit alpha of Comamonas testosteroni (Pseudomonas testosteroni).